The sequence spans 136 residues: 1,4-dihydroxy-2-naphthoyl-CoA hydrolase (136 aa).

Aspartate 16 is a catalytic residue.

The protein belongs to the 4-hydroxybenzoyl-CoA thioesterase family. DHNA-CoA hydrolase subfamily.

The enzyme catalyses 1,4-dihydroxy-2-naphthoyl-CoA + H2O = 1,4-dihydroxy-2-naphthoate + CoA + H(+). Its pathway is cofactor biosynthesis; phylloquinone biosynthesis. It functions in the pathway quinol/quinone metabolism; 1,4-dihydroxy-2-naphthoate biosynthesis; 1,4-dihydroxy-2-naphthoate from chorismate: step 7/7. Catalyzes the hydrolysis of 1,4-dihydroxy-2-naphthoyl-CoA (DHNA-CoA) to 1,4-dihydroxy-2-naphthoate (DHNA), a reaction involved in phylloquinone (vitamin K1) biosynthesis. The polypeptide is 1,4-dihydroxy-2-naphthoyl-CoA hydrolase (Synechococcus sp. (strain ATCC 27144 / PCC 6301 / SAUG 1402/1) (Anacystis nidulans)).